A 75-amino-acid chain; its full sequence is MSGCNCGSSCNCGDQCKCNKRSGLSYVEAGETTETVVLGVGPTKIHFEGAEMSVAAEDGGCKCGSSCTCDPCNCK.

The protein belongs to the metallothionein superfamily. Type 15 family.

Metallothioneins have a high content of cysteine residues that bind various heavy metals. This chain is Metallothionein-like protein 1, found in Cicer arietinum (Chickpea).